The sequence spans 513 residues: GMP synthase [glutamine-hydrolyzing] (513 aa).

A Glutamine amidotransferase type-1 domain is found at 5-195 (LVLVIDFGGQ…VYNICGCTGD (191 aa)). The active-site Nucleophile is the Cys82. Residues His169 and Glu171 contribute to the active site. The 193-residue stretch at 196-388 (WKMDSFVEKT…LGIPEKLVFR (193 aa)) folds into the GMPS ATP-PPase domain. 223–229 (SGGVDSS) is an ATP binding site.

In terms of assembly, homodimer.

It catalyses the reaction XMP + L-glutamine + ATP + H2O = GMP + L-glutamate + AMP + diphosphate + 2 H(+). It functions in the pathway purine metabolism; GMP biosynthesis; GMP from XMP (L-Gln route): step 1/1. In terms of biological role, catalyzes the synthesis of GMP from XMP. The sequence is that of GMP synthase [glutamine-hydrolyzing] from Clostridium botulinum (strain Eklund 17B / Type B).